A 226-amino-acid polypeptide reads, in one-letter code: UPF0502 protein Gbem_0194 (226 aa).

It belongs to the UPF0502 family.

The chain is UPF0502 protein Gbem_0194 from Citrifermentans bemidjiense (strain ATCC BAA-1014 / DSM 16622 / JCM 12645 / Bem) (Geobacter bemidjiensis).